The primary structure comprises 218 residues: Histone H1.1 (218 aa).

Residues 1–42 (MSEVALPAPAASTSPEKPSAGKKAKKPAKAAAAAKKKPAGPS) form a disordered region. N-acetylserine is present on Ser2. 2 positions are modified to phosphoserine: Ser2 and Ser12. An N6-acetyllysine modification is found at Lys17. Basic residues predominate over residues 20–38 (AGKKAKKPAKAAAAAKKKP). Residue Lys37 is modified to N6-(beta-hydroxybutyryl)lysine. An H15 domain is found at 39–112 (AGPSVSELIV…GASGSFKLNK (74 aa)). Ser44 is subject to Phosphoserine. Residue Lys55 is modified to N6-(beta-hydroxybutyryl)lysine. At Arg57 the chain carries Citrulline. Position 67 is an N6-(beta-hydroxybutyryl)lysine (Lys67). An N6-acetyllysine modification is found at Lys78. Lys88 is modified (N6-(beta-hydroxybutyryl)lysine). Lys93 is modified (N6-(beta-hydroxybutyryl)lysine; alternate). The residue at position 93 (Lys93) is an N6-acetyllysine; alternate. The residue at position 107 (Ser107) is a Phosphoserine; by PKC. Lys109 is modified (N6-(beta-hydroxybutyryl)lysine). A disordered region spans residues 116–218 (SVDAKPTATK…KPKKAAPKKK (103 aa)). The segment covering 119–149 (AKPTATKVATKTKVTSASKKPKKASGAAAAK) has biased composition (low complexity). At Lys125 the chain carries N6-acetyllysine. Basic residues-rich tracts occupy residues 150 to 183 (KSVK…KKVA) and 190 to 218 (KAVK…PKKK). Thr206 bears the Phosphothreonine mark.

The protein belongs to the histone H1/H5 family. As to quaternary structure, interacts with DFFB. In terms of processing, H1 histones are progressively phosphorylated during the cell cycle, becoming maximally phosphorylated during late G2 phase and M phase, and being dephosphorylated sharply thereafter. Citrullination at Arg-57 (H1R54ci) by PADI4 takes place within the DNA-binding site of H1 and results in its displacement from chromatin and global chromatin decondensation, thereby promoting pluripotency and stem cell maintenance.

It is found in the nucleus. Its subcellular location is the chromosome. H1 histones bind to linker DNA between nucleosomes forming the macromolecular structure known as the chromatin fiber. H1 histones are necessary for the condensation of nucleosome chains into higher-order structured fibers. Also acts as a regulator of individual gene transcription through chromatin remodeling. In Bos taurus (Bovine), this protein is Histone H1.1.